The chain runs to 324 residues: MECRSLDLTIISAEDLKDVQLIGKQDLYAVVSINGDARTKQKTKVDKDCGTKPKWKHQMKLTVDDAAARDNRLTLVFEIVADRPIAGDKPVGEVSVPVKELLDQNKGDEEKTVTYAVRLPNGKAKGSLKFSFKFGEKYTYGSSSGPHAPVPSAMDHKTMDQPVTAYPPGHGAPSAYPAPPAGPSSGYPPQGHDDKHDGVYGYPQQAGYPAGTGGYPPPGAYPQQGGYPGYPPQQQGGYPGYPPQGPYGYPQQGYPPQGPYGYPQQQAHGKPQKPKKHGKAGAGMGLGLGLGAGLLGGLLVGEAVSDIADMGDMGDMGDMGGFDF.

The C2 domain maps to 1–111 (MECRSLDLTI…LDQNKGDEEK (111 aa)). Topologically, residues 1 to 279 (MECRSLDLTI…KPQKPKKHGK (279 aa)) are cytoplasmic. Positions 141–281 (GSSSGPHAPV…QKPKKHGKAG (141 aa)) are disordered. 2 stretches are compositionally biased toward low complexity: residues 166–175 (YPPGHGAPSA) and 246–269 (PYGY…QAHG). Residues 270 to 279 (KPQKPKKHGK) show a composition bias toward basic residues. The helical; Signal-anchor transmembrane segment at 280-300 (AGAGMGLGLGLGAGLLGGLLV) threads the bilayer. The Lumenal portion of the chain corresponds to 301–324 (GEAVSDIADMGDMGDMGDMGGFDF).

As to quaternary structure, interacts with RBOHF (via N-terminus).

It localises to the endoplasmic reticulum membrane. The protein localises to the protein storage vacuole membrane. It is found in the cell membrane. Its function is as follows. May act as an activator of the calcium-dependent activation of RBOHF that mediates reactive oxygen species (ROS) production and may play a role in cold responses. The protein is Protein SRC2 homolog of Arabidopsis thaliana (Mouse-ear cress).